Here is a 421-residue protein sequence, read N- to C-terminus: Trimethyllysine dioxygenase, mitochondrial (421 aa).

The transit peptide at 1–15 (MWCHRLSHLQSRLQD) directs the protein to the mitochondrion. Lys236 is subject to N6-acetyllysine. Positions 242, 244, and 389 each coordinate Fe cation.

The protein belongs to the gamma-BBH/TMLD family. Homodimer. Requires Fe(2+) as cofactor. L-ascorbate serves as cofactor.

It is found in the mitochondrion matrix. The enzyme catalyses N(6),N(6),N(6)-trimethyl-L-lysine + 2-oxoglutarate + O2 = (3S)-3-hydroxy-N(6),N(6),N(6)-trimethyl-L-lysine + succinate + CO2. It participates in amine and polyamine biosynthesis; carnitine biosynthesis. Converts trimethyllysine (TML) into hydroxytrimethyllysine (HTML). The chain is Trimethyllysine dioxygenase, mitochondrial (TMLHE) from Bos taurus (Bovine).